Reading from the N-terminus, the 532-residue chain is Invertase 2 (532 aa).

A signal peptide spans methionine 1–alanine 19. The N-linked (GlcNAc...) asparagine glycan is linked to asparagine 23. Substrate is bound by residues tryptophan 39–aspartate 42 and glutamine 60. Residue aspartate 42 is part of the active site. N-linked (GlcNAc...) asparagine; partial glycosylation is present at asparagine 64. N-linked (GlcNAc...) asparagine glycosylation is present at asparagine 97. Substrate is bound at residue phenylalanine 102–serine 103. Asparagine 111 and asparagine 118 each carry an N-linked (GlcNAc...) asparagine glycan. Asparagine 165 carries an N-linked (GlcNAc...) asparagine; partial glycan. Residues arginine 170–aspartate 171 and glutamate 223 each bind substrate. N-linked (GlcNAc...) asparagine; partial glycosylation is found at asparagine 266 and asparagine 275. A substrate-binding site is contributed by tryptophan 311. Asparagine 356, asparagine 369, asparagine 384, and asparagine 398 each carry an N-linked (GlcNAc...) asparagine glycan. Asparagine 512 carries an N-linked (GlcNAc...) asparagine; partial glycan.

It belongs to the glycosyl hydrolase 32 family. Isoform Secreted is glycosylated. Isoform Intracellular is not glycosylated.

The protein resides in the cytoplasm. It localises to the secreted. It catalyses the reaction Hydrolysis of terminal non-reducing beta-D-fructofuranoside residues in beta-D-fructofuranosides.. This Saccharomyces cerevisiae (strain ATCC 204508 / S288c) (Baker's yeast) protein is Invertase 2 (SUC2).